The following is a 307-amino-acid chain: Thymidylate synthase (307 aa).

Residues 1–22 are disordered; sequence MLVEGSELQSGAQQPRTEAPQH. The span at 7–16 shows a compositional bias: polar residues; the sequence is ELQSGAQQPR. R44 is a binding site for dUMP. Residue S108 is modified to Phosphoserine. DUMP contacts are provided by residues 169-170, 189-190, 209-212, N220, and 250-252; these read RR, CH, RSGD, and HIY. The active-site Nucleophile is the C189. Position 212 (D212) interacts with (6R)-5,10-methylene-5,6,7,8-tetrahydrofolate. Residues K286 and K302 each participate in a glycyl lysine isopeptide (Lys-Gly) (interchain with G-Cter in SUMO2) cross-link. A306 serves as a coordination point for (6R)-5,10-methylene-5,6,7,8-tetrahydrofolate.

It belongs to the thymidylate synthase family. In terms of assembly, homodimer.

The protein resides in the nucleus. The protein localises to the cytoplasm. It localises to the mitochondrion. It is found in the mitochondrion matrix. Its subcellular location is the mitochondrion inner membrane. It catalyses the reaction dUMP + (6R)-5,10-methylene-5,6,7,8-tetrahydrofolate = 7,8-dihydrofolate + dTMP. It participates in pyrimidine metabolism; dTTP biosynthesis. In terms of biological role, catalyzes the reductive methylation of 2'-deoxyuridine 5'-monophosphate (dUMP) to thymidine 5'-monophosphate (dTMP), using the cosubstrate, 5,10- methylenetetrahydrofolate (CH2H4folate) as a 1-carbon donor and reductant and contributes to the de novo mitochondrial thymidylate biosynthesis pathway. In Rattus norvegicus (Rat), this protein is Thymidylate synthase (Tyms).